Reading from the N-terminus, the 228-residue chain is Lipoprotein-releasing system ATP-binding protein LolD (228 aa).

Residues 6-227 enclose the ABC transporter domain; that stretch reads LELLGIDRTY…LKDGKLIDYV (222 aa). An ATP-binding site is contributed by 42 to 49; sequence GPSGSGKS.

This sequence belongs to the ABC transporter superfamily. Lipoprotein translocase (TC 3.A.1.125) family. In terms of assembly, the complex is composed of two ATP-binding proteins (LolD) and two transmembrane proteins (LolC and LolE).

Its subcellular location is the cell inner membrane. Part of the ABC transporter complex LolCDE involved in the translocation of mature outer membrane-directed lipoproteins, from the inner membrane to the periplasmic chaperone, LolA. Responsible for the formation of the LolA-lipoprotein complex in an ATP-dependent manner. This is Lipoprotein-releasing system ATP-binding protein LolD from Hyphomonas neptunium (strain ATCC 15444).